Consider the following 154-residue polypeptide: MTQHDNISQIENIIEPAVRDLGYDLVDVELIMENQKWVLRVYIDHGKGIGLDDCELVSNSLDQLLDEHDPIPHSYVLEVSSPGAERPLKKKKDFVNFAGKKVQIKTYVKLDGRKNFKGKLLGLEDEHVVLETFNSGEVKIPLDKIAKANLLLEL.

The protein belongs to the RimP family.

Its subcellular location is the cytoplasm. In terms of biological role, required for maturation of 30S ribosomal subunits. In Natranaerobius thermophilus (strain ATCC BAA-1301 / DSM 18059 / JW/NM-WN-LF), this protein is Ribosome maturation factor RimP.